An 814-amino-acid chain; its full sequence is Exostosin-like-3 homolog (814 aa).

The Cytoplasmic portion of the chain corresponds to 1–14 (MAIKLNGSSRSFVP). A helical; Signal-anchor for type II membrane protein transmembrane segment spans residues 15–35 (SLRVSAFLIFIFFVITYIIIY). Asn36, Asn227, Asn297, Asn322, Asn454, and Asn492 each carry an N-linked (GlcNAc...) asparagine glycan. The Lumenal portion of the chain corresponds to 36–814 (NVSFSEPSWI…QNHQKCFKYV (779 aa)). Positions 570, 595, 620, 625, 641, 642, and 643 each coordinate UDP-N-acetyl-alpha-D-glucosamine. Asp643 serves as a coordination point for Mn(2+). N-linked (GlcNAc...) asparagine glycosylation occurs at Asn685. Residues Cys726 and Cys774 are joined by a disulfide bond. Glu727, Asp728, and Arg771 together coordinate UDP-N-acetyl-alpha-D-glucosamine. Residue Asp728 is part of the active site.

This sequence belongs to the glycosyltransferase 47 family. Interacts with rib-1. It depends on Mn(2+) as a cofactor.

The protein resides in the endoplasmic reticulum membrane. It localises to the golgi apparatus membrane. The enzyme catalyses 3-O-(beta-D-GlcA-(1-&gt;3)-beta-D-Gal-(1-&gt;3)-beta-D-Gal-(1-&gt;4)-beta-D-Xyl)-L-seryl-[protein] + UDP-N-acetyl-alpha-D-glucosamine = 3-O-(alpha-D-GlcNAc-(1-&gt;4)-beta-D-GlcA-(1-&gt;3)-beta-D-Gal-(1-&gt;3)-beta-D-Gal-(1-&gt;4)-beta-D-Xyl)-L-seryl-[protein] + UDP + H(+). The catalysed reaction is 3-O-{[(1-&gt;4)-beta-D-GlcA-(1-&gt;4)-alpha-D-GlcNAc](n)-(1-&gt;4)-beta-D-GlcA-(1-&gt;3)-beta-D-Gal-(1-&gt;3)-beta-D-Gal-(1-&gt;4)-beta-D-Xyl}-L-seryl-[protein] + UDP-N-acetyl-alpha-D-glucosamine = 3-O-{alpha-D-GlcNAc-[(1-&gt;4)-beta-D-GlcA-(1-&gt;4)-alpha-D-GlcNAc](n)-(1-&gt;4)-beta-D-GlcA-(1-&gt;3)-beta-D-Gal-(1-&gt;3)-beta-D-Gal-(1-&gt;4)-beta-D-Xyl}-L-seryl-[protein] + UDP + H(+). It carries out the reaction 3-O-{alpha-D-GlcNAc-[(1-&gt;4)-beta-D-GlcA-(1-&gt;4)-alpha-D-GlcNAc](n)-(1-&gt;4)-beta-D-GlcA-(1-&gt;3)-beta-D-Gal-(1-&gt;3)-beta-D-Gal-(1-&gt;4)-beta-D-Xyl}-L-seryl-[protein] + UDP-alpha-D-glucuronate = 3-O-{[(1-&gt;4)-beta-D-GlcA-(1-&gt;4)-alpha-D-GlcNAc](n+1)-(1-&gt;4)-beta-D-GlcA-(1-&gt;3)-beta-D-Gal-(1-&gt;3)-beta-D-Gal-(1-&gt;4)-beta-D-Xyl}-L-seryl-[protein] + UDP + H(+). It functions in the pathway glycan metabolism; heparan sulfate biosynthesis. Its activity is regulated as follows. Binding to rib-1 is required for GlcAT-II activity and for increasing GlcNAc-II activity in vitro. In terms of biological role, glycosyltransferase required for the biosynthesis of heparan sulfate. Initiates heparan sulfate synthesis by transferring GlcNAc to the (GlcA-Gal-Gal-Xyl-)Ser core linker (GlcNAcT-I activity). In association with rib-1, is also responsible for the alternating addition of beta-1-4-linked glucuronic acid (GlcA) and alpha-1-4-linked N-acetylglucosamine (GlcNAc) units to nascent heparan sulfate chains (GlcNAcT-II and GlcAT-II activities). Required for normal ventral epidermal enclosure during the early stages of embryonic development. In addition, involved in the elongation of the pharyngeal isthmus during the later stages of embryonic development. Involved in the directed migration of hermaphrodite-specific neurons. The polypeptide is Exostosin-like-3 homolog (rib-2) (Caenorhabditis elegans).